The sequence spans 286 residues: Probable endonuclease 4 (286 aa).

Positions 72, 112, 147, 181, 184, 215, 228, 230, and 260 each coordinate Zn(2+).

This sequence belongs to the AP endonuclease 2 family. The cofactor is Zn(2+).

The enzyme catalyses Endonucleolytic cleavage to 5'-phosphooligonucleotide end-products.. In terms of biological role, endonuclease IV plays a role in DNA repair. It cleaves phosphodiester bonds at apurinic or apyrimidinic (AP) sites, generating a 3'-hydroxyl group and a 5'-terminal sugar phosphate. The sequence is that of Probable endonuclease 4 from Mycoplasma pneumoniae (strain ATCC 29342 / M129 / Subtype 1) (Mycoplasmoides pneumoniae).